Reading from the N-terminus, the 81-residue chain is Large ribosomal subunit protein bL31 (81 aa).

It belongs to the bacterial ribosomal protein bL31 family. Type A subfamily. In terms of assembly, part of the 50S ribosomal subunit.

Binds the 23S rRNA. The protein is Large ribosomal subunit protein bL31 of Synechocystis sp. (strain ATCC 27184 / PCC 6803 / Kazusa).